A 201-amino-acid polypeptide reads, in one-letter code: Retinol-binding protein 4 (201 aa).

Positions 1 to 18 (MEWVWALVLLAALGGGSA) are cleaved as a signal peptide. Cystine bridges form between C22/C178, C88/C192, and C138/C147. Q116 is a substrate binding site. Omega-N-methylarginine is present on R139.

This sequence belongs to the calycin superfamily. Lipocalin family. In terms of assembly, interacts with TTR. Interaction with TTR prevents its loss by filtration through the kidney glomeruli. Interacts with STRA6.

The protein localises to the secreted. In terms of biological role, retinol-binding protein that mediates retinol transport in blood plasma. Delivers retinol from the liver stores to the peripheral tissues. Transfers the bound all-trans retinol to STRA6, that then facilitates retinol transport across the cell membrane. This is Retinol-binding protein 4 (Rbp4) from Mus musculus (Mouse).